A 377-amino-acid polypeptide reads, in one-letter code: Homocitrate synthase 1 (377 aa).

A Pyruvate carboxyltransferase domain is found at 4–255 (VLINDTTLRD…DMGIDTPRLL (252 aa)).

Belongs to the alpha-IPM synthase/homocitrate synthase family.

The enzyme catalyses acetyl-CoA + 2-oxoglutarate + H2O = (2R)-homocitrate + CoA + H(+). Functionally, this protein is a Fe-Mo-cofactor biosynthetic component. The chain is Homocitrate synthase 1 (nifV1) from Nostoc sp. (strain PCC 7120 / SAG 25.82 / UTEX 2576).